We begin with the raw amino-acid sequence, 162 residues long: Cytochrome c-type biogenesis protein CcmE (162 aa).

At 1–8 (MNPVRKKR) the chain is on the cytoplasmic side. A helical; Signal-anchor for type II membrane protein membrane pass occupies residues 9 to 29 (LIIVLAIVVGVGAAVGLALSA). Residues 30 to 162 (LQQNINLFYT…GETSYNQEGK (133 aa)) are Periplasmic-facing. Histidine 124 and tyrosine 128 together coordinate heme. Basic and acidic residues predominate over residues 139–148 (DSGQLKHYEN). The disordered stretch occupies residues 139-162 (DSGQLKHYENGKAAGETSYNQEGK).

Belongs to the CcmE/CycJ family.

The protein localises to the cell inner membrane. Functionally, heme chaperone required for the biogenesis of c-type cytochromes. Transiently binds heme delivered by CcmC and transfers the heme to apo-cytochromes in a process facilitated by CcmF and CcmH. The protein is Cytochrome c-type biogenesis protein CcmE of Pseudomonas aeruginosa (strain LESB58).